A 73-amino-acid chain; its full sequence is MPKKDAIEVEATVLEALPSAAFRVQLSNGHEVLAHISGKMRVHYIRILPGDRVLVELSPYDLTRGRVTYRFKS.

One can recognise an S1-like domain in the interval 1 to 72 (MPKKDAIEVE…TRGRVTYRFK (72 aa)).

Belongs to the IF-1 family. Component of the 30S ribosomal translation pre-initiation complex which assembles on the 30S ribosome in the order IF-2 and IF-3, IF-1 and N-formylmethionyl-tRNA(fMet); mRNA recruitment can occur at any time during PIC assembly.

It is found in the cytoplasm. Its function is as follows. One of the essential components for the initiation of protein synthesis. Stabilizes the binding of IF-2 and IF-3 on the 30S subunit to which N-formylmethionyl-tRNA(fMet) subsequently binds. Helps modulate mRNA selection, yielding the 30S pre-initiation complex (PIC). Upon addition of the 50S ribosomal subunit IF-1, IF-2 and IF-3 are released leaving the mature 70S translation initiation complex. This Dehalococcoides mccartyi (strain ATCC BAA-2266 / KCTC 15142 / 195) (Dehalococcoides ethenogenes (strain 195)) protein is Translation initiation factor IF-1.